The sequence spans 452 residues: Phosphoglucosamine mutase (452 aa).

S108 functions as the Phosphoserine intermediate in the catalytic mechanism. Mg(2+) is bound by residues S108, D247, D249, and D251. S108 is subject to Phosphoserine.

This sequence belongs to the phosphohexose mutase family. Mg(2+) is required as a cofactor. Post-translationally, activated by phosphorylation.

It carries out the reaction alpha-D-glucosamine 1-phosphate = D-glucosamine 6-phosphate. Its function is as follows. Catalyzes the conversion of glucosamine-6-phosphate to glucosamine-1-phosphate. The polypeptide is Phosphoglucosamine mutase (Burkholderia thailandensis (strain ATCC 700388 / DSM 13276 / CCUG 48851 / CIP 106301 / E264)).